We begin with the raw amino-acid sequence, 416 residues long: UDP-N-acetylglucosamine 1-carboxyvinyltransferase (416 aa).

22–23 (KN) lines the phosphoenolpyruvate pocket. Arginine 91 serves as a coordination point for UDP-N-acetyl-alpha-D-glucosamine. The active-site Proton donor is cysteine 115. Cysteine 115 carries the post-translational modification 2-(S-cysteinyl)pyruvic acid O-phosphothioketal. Residues 120 to 124 (RPIDL), aspartate 305, and isoleucine 327 contribute to the UDP-N-acetyl-alpha-D-glucosamine site.

The protein belongs to the EPSP synthase family. MurA subfamily.

The protein localises to the cytoplasm. The enzyme catalyses phosphoenolpyruvate + UDP-N-acetyl-alpha-D-glucosamine = UDP-N-acetyl-3-O-(1-carboxyvinyl)-alpha-D-glucosamine + phosphate. It functions in the pathway cell wall biogenesis; peptidoglycan biosynthesis. Functionally, cell wall formation. Adds enolpyruvyl to UDP-N-acetylglucosamine. The protein is UDP-N-acetylglucosamine 1-carboxyvinyltransferase of Buchnera aphidicola subsp. Acyrthosiphon pisum (strain Tuc7).